The sequence spans 162 residues: MDKKINPKKVEMFNSLKEFLDGKDNIFFLDYRGLTVAELTKLRSRVEDEKGALKVVKNNIMKRVLKDKDIEGLDSYLLGPTAVVTAFDEANVIAKIFYEFVKTTTLKVKGGFVLGEVYDELKLSAYSKLPTKIESISLFMSVLKAPMSKLVRTLKALSDIKV.

Belongs to the universal ribosomal protein uL10 family. Part of the ribosomal stalk of the 50S ribosomal subunit. The N-terminus interacts with L11 and the large rRNA to form the base of the stalk. The C-terminus forms an elongated spine to which L12 dimers bind in a sequential fashion forming a multimeric L10(L12)X complex.

Forms part of the ribosomal stalk, playing a central role in the interaction of the ribosome with GTP-bound translation factors. This Borrelia duttonii (strain Ly) protein is Large ribosomal subunit protein uL10.